The primary structure comprises 900 residues: Sterol regulatory element-binding protein 1 (900 aa).

The span at 1-16 (MQSSIPSVSVSVASPA) shows a compositional bias: low complexity. Disordered stretches follow at residues 1-49 (MQSS…TKAS) and 206-263 (TTCK…PKKT). The nuclear form of sre1; complements deletions of sre1 or scp1 stretch occupies residues 1–440 (MQSSIPSVSV…FALPPFLMSP (440 aa)). The Cytoplasmic portion of the chain corresponds to 1 to 442 (MQSSIPSVSV…LPPFLMSPFT (442 aa)). Polar residues predominate over residues 21-32 (TKASPDSKSPNS). Residues 35-49 (AIPSSSPLASSTKAS) are compositionally biased toward low complexity. Positions 260–332 (PKKTAHNMIE…AKATEYIRHL (73 aa)) constitute a bHLH domain. The chain crosses the membrane as a helical span at residues 443–463 (GTVLFNMLKIGVVLLGLFYLL). At 464–509 (HDNSLFKGFKGEKKSKVSTRSSMSPSSILFRKTVFEKYCLLDHSTS) the chain is on the lumenal side. Residues 510–530 (TISLFFGLLIFTLKSAYGYLT) form a helical membrane-spanning segment. Residues 531–900 (HRLSALYTSS…QEDLGYVSSA (370 aa)) are Cytoplasmic-facing. Ser-898 and Ser-899 each carry phosphoserine.

Forms a tight complex with scp1, composed of 4 copies of scp1 and 4 copies of sre1, which protects sre1 precursor from degradation by the proteasome. In terms of processing, in low oxygen or sterol conditions, undergoes proteolytic cleavage by rhomboid-type protease rbd2 and is released as soluble transcription factor from the membrane. Post-translationally, processed form is phosphorylated.

The protein resides in the endoplasmic reticulum membrane. The protein localises to the nucleus. Precursor of the transcription factor form (Processed sterol regulatory element-binding protein 1), which is embedded in the endoplasmic reticulum membrane. Low oxygen or sterol conditions promote processing of this form, releasing the transcription factor form that translocates into the nucleus and activates transcription of genes required for adaptation to anaerobic growth. Its function is as follows. Transcriptional activator required for transcription of genes required for adaptation to anaerobic growth like those implicated in the nonrespiratory oxygen-consumptive biosynthetic pathways of sterol, heme, sphingolipid, and ubiquinone biosynthesis. May monitor oxygen levels through sterol synthesis steps which require oxygen. This Schizosaccharomyces pombe (strain 972 / ATCC 24843) (Fission yeast) protein is Sterol regulatory element-binding protein 1.